Consider the following 588-residue polypeptide: Aspartate--tRNA ligase (588 aa).

Residue E172 participates in L-aspartate binding. The interval 196–199 is aspartate; the sequence is QLFK. R218 provides a ligand contact to L-aspartate. ATP-binding positions include 218 to 220 and Q227; that span reads RDE. H449 serves as a coordination point for L-aspartate. E483 provides a ligand contact to ATP. R490 contributes to the L-aspartate binding site. Position 535–538 (535–538) interacts with ATP; it reads GLDR.

This sequence belongs to the class-II aminoacyl-tRNA synthetase family. Type 1 subfamily. Homodimer.

It localises to the cytoplasm. It catalyses the reaction tRNA(Asp) + L-aspartate + ATP = L-aspartyl-tRNA(Asp) + AMP + diphosphate. In terms of biological role, catalyzes the attachment of L-aspartate to tRNA(Asp) in a two-step reaction: L-aspartate is first activated by ATP to form Asp-AMP and then transferred to the acceptor end of tRNA(Asp). The protein is Aspartate--tRNA ligase of Haemophilus influenzae (strain ATCC 51907 / DSM 11121 / KW20 / Rd).